Consider the following 302-residue polypeptide: Bifunctional protein FolD (302 aa).

Residues 168–170, Thr197, and Val238 each bind NADP(+); that span reads GRS.

The protein belongs to the tetrahydrofolate dehydrogenase/cyclohydrolase family. Homodimer.

The enzyme catalyses (6R)-5,10-methylene-5,6,7,8-tetrahydrofolate + NADP(+) = (6R)-5,10-methenyltetrahydrofolate + NADPH. The catalysed reaction is (6R)-5,10-methenyltetrahydrofolate + H2O = (6R)-10-formyltetrahydrofolate + H(+). The protein operates within one-carbon metabolism; tetrahydrofolate interconversion. Functionally, catalyzes the oxidation of 5,10-methylenetetrahydrofolate to 5,10-methenyltetrahydrofolate and then the hydrolysis of 5,10-methenyltetrahydrofolate to 10-formyltetrahydrofolate. This Desulfatibacillum aliphaticivorans protein is Bifunctional protein FolD.